The following is a 383-amino-acid chain: Aliphatic nitrilase (383 aa).

Residues 13 to 288 form the CN hydrolase domain; sequence VKVATVQAEP…EGLLYAELDL (276 aa). Catalysis depends on Glu-53, which acts as the Proton acceptor. Lys-136 (proton donor) is an active-site residue. Cys-170 serves as the catalytic Nucleophile. Positions 359–383 are disordered; the sequence is ATLPLDAPAPAPAPEQKSGRAKAEA.

It belongs to the carbon-nitrogen hydrolase superfamily. Nitrilase family.

It catalyses the reaction an aliphatic nitrile + 2 H2O = a carboxylate + NH4(+). Acts on aliphatic nitriles such as acrylonitrile, crotononitrile and glutaronitrile. The chain is Aliphatic nitrilase from Rhodococcus rhodochrous.